The primary structure comprises 299 residues: 4-hydroxy-tetrahydrodipicolinate synthase (299 aa).

Threonine 44 is a binding site for pyruvate. Catalysis depends on tyrosine 133, which acts as the Proton donor/acceptor. Lysine 162 serves as the catalytic Schiff-base intermediate with substrate. Isoleucine 204 is a pyruvate binding site.

This sequence belongs to the DapA family. Homotetramer; dimer of dimers.

It localises to the cytoplasm. It catalyses the reaction L-aspartate 4-semialdehyde + pyruvate = (2S,4S)-4-hydroxy-2,3,4,5-tetrahydrodipicolinate + H2O + H(+). Its pathway is amino-acid biosynthesis; L-lysine biosynthesis via DAP pathway; (S)-tetrahydrodipicolinate from L-aspartate: step 3/4. Functionally, catalyzes the condensation of (S)-aspartate-beta-semialdehyde [(S)-ASA] and pyruvate to 4-hydroxy-tetrahydrodipicolinate (HTPA). This is 4-hydroxy-tetrahydrodipicolinate synthase from Thermus thermophilus (strain ATCC BAA-163 / DSM 7039 / HB27).